A 310-amino-acid polypeptide reads, in one-letter code: Basic salivary proline-rich protein 4 (310 aa).

The N-terminal stretch at 1–16 (MLLILLSVALLALSSA) is a signal peptide. The disordered stretch occupies residues 14–310 (SSAESSSEDV…RPAQGQQPPQ (297 aa)). Tandem repeats lie at residues 35 to 55 (KPEG…PPPG), 56 to 76 (KPQG…PPPG), 77 to 97 (KPEG…PHPG), 98 to 118 (KPER…PHPG), 119 to 139 (KPES…PTPG), 140 to 160 (KPEG…PPPG), 161 to 181 (KPEG…PHPG), 182 to 202 (KPER…PPPG), and 203 to 223 (KPER…PHPG). Positions 35 to 234 (KPEGRRPQGG…PEGPPPQEGN (200 aa)) are 9.5 X 21 AA tandem repeats of K-P-[EQ]-[GR]-[PR]-[PR]-P-Q-G-G-N-Q-[PS]-[QH]-[RG]-[PT]-P-P-[PH]-P-G. The span at 48 to 63 (QRPPPPPGKPQGPPPQ) shows a compositional bias: pro residues. N-linked (GlcNAc...) asparagine glycans are attached at residues Asn66, Asn87, and Asn108. Pro residues predominate over residues 133–147 (GPPPTPGKPEGPPPQ). 3 N-linked (GlcNAc...) asparagine glycosylation sites follow: Asn150, Asn171, and Asn192. Pro residues predominate over residues 196–210 (RPPPPPGKPERPPPQ). The N-linked (GlcNAc...) asparagine glycan is linked to Asn213. The span at 217–231 (GPPPHPGKPEGPPPQ) shows a compositional bias: pro residues. Residues 224 to 234 (KPEGPPPQEGN) form a 10; truncated repeat. An N-linked (GlcNAc...) asparagine glycan is attached at Asn234. Over residues 258-310 (QGPPPPGKPQGPPPAGGNPQQPQAPPAGKPQGPPPPPQGGRPPRPAQGQQPPQ) the composition is skewed to pro residues.

In terms of processing, N-glycosylated. Post-translationally, proteolytically cleaved at the tripeptide Xaa-Pro-Gln, where Xaa in the P(3) position is mostly lysine. The endoprotease may be of microbial origin. Pyroglutamate formation found on at least Gln-46, Gln-48, Gln-67, Gln-88; Gln-90; Gln-193; Gln-288 Gln-214 and Gln-295, preferentially in diabetic, and head and neck cancer patients.

Its subcellular location is the secreted. The polypeptide is Basic salivary proline-rich protein 4 (PRB4) (Homo sapiens (Human)).